The primary structure comprises 422 residues: Testin (422 aa).

The PET domain maps to 92 to 199 (MILTNPVPAK…GDVKLPSEMD (108 aa)). Disordered regions lie at residues 135 to 162 (QPVA…QDPS) and 194 to 226 (LPSE…EDKS). The segment covering 194-212 (LPSEMDVKPGDRSSLDGGD) has biased composition (basic and acidic residues). LIM zinc-binding domains lie at 234–297 (YSCY…CDSE), 299–359 (PRCA…NHAV), and 362–422 (QGCH…MMMS).

This sequence belongs to the prickle / espinas / testin family. Interacts via LIM domain 1 with ZYX. Interacts (via LIM domain 3) with ENAH and VASP. Interacts with ALKBH4, talin, actin, alpha-actinin, GRIP1 and PXN. Interacts (via LIM domain 2) with ACTL7A (via N-terminus). Heterodimer with ACTL7A; the heterodimer interacts with ENAH to form a heterotrimer.

It is found in the cytoplasm. It localises to the cell junction. The protein resides in the focal adhesion. Functionally, scaffold protein that may play a role in cell adhesion, cell spreading and in the reorganization of the actin cytoskeleton. Plays a role in the regulation of cell proliferation. May act as a tumor suppressor. The polypeptide is Testin (TES) (Monodelphis domestica (Gray short-tailed opossum)).